The following is a 520-amino-acid chain: AAA-ATPase At5g57480 (520 aa).

Positions 1 to 24 are cleaved as a signal peptide; that stretch reads MKEYWTSLASLLGVLAFCQSLMQS. 244–251 provides a ligand contact to ATP; sequence GPPGTGKS. Disordered stretches follow at residues 307–340 and 467–520; these read KKNS…EEGG and NVKD…TRED. Residues 328–340 show a composition bias toward gly residues; the sequence is SGSGSGGSGEEGG. The segment covering 497-512 has biased composition (acidic residues); it reads QNEDEDHDEEEIELED.

It belongs to the AAA ATPase family. BCS1 subfamily. Mg(2+) serves as cofactor.

It carries out the reaction ATP + H2O = ADP + phosphate + H(+). The polypeptide is AAA-ATPase At5g57480 (Arabidopsis thaliana (Mouse-ear cress)).